A 364-amino-acid polypeptide reads, in one-letter code: RNA-binding protein ZC3H11 (364 aa).

The C3H1-type zinc-finger motif lies at 64 to 92; that stretch reads RYKTKLCKNFVQYGTCPYDIRCMFAHGEE. The short motif at 194–199 is the MKT1-binding motif element; the sequence is VRHNPY. The interval 340 to 364 is disordered; that stretch reads EQSQSHLKREGNEGRGEGLHMFLSL. Over residues 346–357 the composition is skewed to basic and acidic residues; that stretch reads LKREGNEGRGEG.

Interacts (via MKT1-binding motif) with MKT1. Interacts with PBP1 (via C-terminus); the interaction is direct. Phosphorylated at the N-terminus. CK1.2-dependent phosphorylation may lead to proteasome-dependent degradation of ZC3H11 in absence of stress.

It is found in the cytoplasm. Functionally, RNA-binding protein involved in regulation of mRNA stability. Binds AU-rich regions in the 3'-UTR of mRNAs and promotes their stabilization by recruiting a MKT1-containing complex. Stabilizes chaperone mRNAs during stress that causes an accumulation of misfolded or unfolded proteins in the cytoplasm. In Trypanosoma brucei brucei (strain 927/4 GUTat10.1), this protein is RNA-binding protein ZC3H11.